Consider the following 438-residue polypeptide: UPF0597 protein YE0448 (438 aa).

Belongs to the UPF0597 family.

This chain is UPF0597 protein YE0448, found in Yersinia enterocolitica serotype O:8 / biotype 1B (strain NCTC 13174 / 8081).